The primary structure comprises 182 residues: uncharacterized protein (182 aa).

The protein belongs to the mimivirus L28/L54 family.

This is an uncharacterized protein from Acanthamoeba polyphaga (Amoeba).